Reading from the N-terminus, the 73-residue chain is uncharacterized protein (73 aa).

This is an uncharacterized protein from Dictyostelium discoideum (Social amoeba).